Consider the following 504-residue polypeptide: MDTIKAEEISQIISKQIRDYEKKLDVSETGTVLSVGDGIARIYGVENAMAMELLEFPGGIMGMVLNLEADNVGVAVLGDVTHIKEGDIVKRTGKIAQIPVGEALLGRVIDATGEPIDGKGPLGATEFSRIEMIAPGVIKRQPVNEPMYTGLKAIDAMTPIGRGQRELIIGDRQIGKTAIGIDAIIRQKDTGVKCIYVAIGQKKSTVSQIVENLRKHDAMSYTCVVAGCASDPATLQYIAAYAGCSIGEYFRDRGQDALIIYDDLSKQAVAYRQISLLLRRPPGREAYPGDIFYNHSRLLERSARVSADLGGGSLTALPIIETQAGDVSAYIPTNVISITDGQVYLEPSLFFSGIRPAINVGLSVSRVGGAAQVKAMKQVAGTLKLDLAQYRELASFAQFGSDLDKATQAQLDRGVRLVEILKQPQFQPMSLAEEVIVLFAGTRGFLDKYEVEKIKEYEPQVLAYMKSKHQDIMQEIDDKKVISPELEQKIKEALTAFDSVFVAG.

An ATP-binding site is contributed by 170–177; that stretch reads GDRQIGKT.

This sequence belongs to the ATPase alpha/beta chains family. As to quaternary structure, F-type ATPases have 2 components, CF(1) - the catalytic core - and CF(0) - the membrane proton channel. CF(1) has five subunits: alpha(3), beta(3), gamma(1), delta(1), epsilon(1). CF(0) has three main subunits: a(1), b(2) and c(9-12). The alpha and beta chains form an alternating ring which encloses part of the gamma chain. CF(1) is attached to CF(0) by a central stalk formed by the gamma and epsilon chains, while a peripheral stalk is formed by the delta and b chains.

It is found in the cell inner membrane. The catalysed reaction is ATP + H2O + 4 H(+)(in) = ADP + phosphate + 5 H(+)(out). Produces ATP from ADP in the presence of a proton gradient across the membrane. The alpha chain is a regulatory subunit. This Syntrophus aciditrophicus (strain SB) protein is ATP synthase subunit alpha 1.